Here is a 243-residue protein sequence, read N- to C-terminus: SSPEKKNDMSKPGRMRFDNKKEPRSSAKNSGNGYGCVDVNAGREPLTGPGKYPSSFLLLLEHRKPPDKDRDRWDNVKGCERKDGKSHWYDSMLKHRSPREKTLVGSGKDSTNFVYRLLTEPLLNERAGCKVVDMWYSLSYWMDVVNKRFGLCHYLGSMMDHGRWNDYSLCKDSYAGKHKPAGGPPTPRLKNREECKFYWCWSGSEERAGGMGREYVMHSGGLYGDLTDKRDDPEPNGNLEGGV.

The span at 1–25 (SSPEKKNDMSKPGRMRFDNKKEPRS) shows a compositional bias: basic and acidic residues. Residues 1 to 48 (SSPEKKNDMSKPGRMRFDNKKEPRSSAKNSGNGYGCVDVNAGREPLTG) are disordered.

Contains disulfide bonds. Nematocytes.

Its subcellular location is the secreted. It is found in the nematocyst. The protein resides in the target cell membrane. Its function is as follows. Has potent hemolytic activity. Is lethal to crayfish. Causes cutaneous inflammation in humans. May act as a pore-forming toxin, disrupting normal transmembrane ion concentration gradients in susceptible cells. The chain is Toxin CcTX-1 from Cyanea capillata (Lion's mane jellyfish).